Consider the following 93-residue polypeptide: Small integral membrane protein 36 (93 aa).

A helical membrane pass occupies residues 14–34 (LIILVASYVILLLVFLVSCVL). The segment at 70-93 (SHWARGPSLHLKDPAPLGKKSTVV) is disordered.

The protein localises to the membrane. This chain is Small integral membrane protein 36, found in Mus musculus (Mouse).